The chain runs to 263 residues: Glucosamine-6-phosphate deaminase (263 aa).

Asp72 (proton acceptor; for enolization step) is an active-site residue. Asp141 functions as the For ring-opening step in the catalytic mechanism. Residue His143 is the Proton acceptor; for ring-opening step of the active site. Glu148 (for ring-opening step) is an active-site residue.

It belongs to the glucosamine/galactosamine-6-phosphate isomerase family. NagB subfamily.

It carries out the reaction alpha-D-glucosamine 6-phosphate + H2O = beta-D-fructose 6-phosphate + NH4(+). It functions in the pathway amino-sugar metabolism; N-acetylneuraminate degradation; D-fructose 6-phosphate from N-acetylneuraminate: step 5/5. With respect to regulation, allosterically activated by N-acetylglucosamine 6-phosphate (GlcNAc6P). Its function is as follows. Catalyzes the reversible isomerization-deamination of glucosamine 6-phosphate (GlcN6P) to form fructose 6-phosphate (Fru6P) and ammonium ion. This is Glucosamine-6-phosphate deaminase from Phocaeicola vulgatus (strain ATCC 8482 / DSM 1447 / JCM 5826 / CCUG 4940 / NBRC 14291 / NCTC 11154) (Bacteroides vulgatus).